Consider the following 264-residue polypeptide: Thiazole synthase (264 aa).

Residue K106 is the Schiff-base intermediate with DXP of the active site. Residues G167, 193–194, and 215–216 contribute to the 1-deoxy-D-xylulose 5-phosphate site; these read AG and NS.

The protein belongs to the ThiG family. As to quaternary structure, homotetramer. Forms heterodimers with either ThiH or ThiS.

It localises to the cytoplasm. The enzyme catalyses [ThiS sulfur-carrier protein]-C-terminal-Gly-aminoethanethioate + 2-iminoacetate + 1-deoxy-D-xylulose 5-phosphate = [ThiS sulfur-carrier protein]-C-terminal Gly-Gly + 2-[(2R,5Z)-2-carboxy-4-methylthiazol-5(2H)-ylidene]ethyl phosphate + 2 H2O + H(+). It functions in the pathway cofactor biosynthesis; thiamine diphosphate biosynthesis. Catalyzes the rearrangement of 1-deoxy-D-xylulose 5-phosphate (DXP) to produce the thiazole phosphate moiety of thiamine. Sulfur is provided by the thiocarboxylate moiety of the carrier protein ThiS. In vitro, sulfur can be provided by H(2)S. This chain is Thiazole synthase, found in Ectopseudomonas mendocina (strain ymp) (Pseudomonas mendocina).